The following is a 111-amino-acid chain: Secreted RxLR effector protein 82 (111 aa).

The first 17 residues, 1 to 17 (MFHLYLLLVFETRYTCL), serve as a signal peptide directing secretion. A RxLR motif is present at residues 28–31 (RWLR).

It belongs to the RxLR effector family.

It is found in the secreted. Its subcellular location is the host nucleus. Functionally, secreted effector that acts as an elicitor that induces cell death in host plant cells. The chain is Secreted RxLR effector protein 82 from Plasmopara viticola (Downy mildew of grapevine).